Here is a 68-residue protein sequence, read N- to C-terminus: U-scoloptoxin(02)-Er1a (68 aa).

The N-terminal stretch at Met-1–Thr-20 is a signal peptide. 3 disulfide bridges follow: Cys-30–Cys-52, Cys-38–Cys-58, and Cys-42–Cys-60.

It belongs to the invertebrate defensin family. As to expression, expressed by the venom gland.

Its subcellular location is the secreted. Antibacterial peptide mostly active against Gram-positive bacteria. In Ethmostigmus rubripes (Giant centipede), this protein is U-scoloptoxin(02)-Er1a.